Consider the following 389-residue polypeptide: Serpin B13 (389 aa).

Belongs to the serpin family. Ov-serpin subfamily.

The protein localises to the cytoplasm. Its function is as follows. May play a role in the proliferation or differentiation of keratinocytes. This Mus musculus (Mouse) protein is Serpin B13 (Serpinb13).